Reading from the N-terminus, the 383-residue chain is tRNA-specific 2-thiouridylase MnmA (383 aa).

Residues 9–16 and M35 contribute to the ATP site; that span reads GMSGGVDS. Residues 95-97 are interaction with target base in tRNA; it reads NPD. Catalysis depends on C100, which acts as the Nucleophile. A disulfide bridge connects residues C100 and C196. G124 is an ATP binding site. Residues 146-148 are interaction with tRNA; sequence KDQ. C196 (cysteine persulfide intermediate) is an active-site residue. Positions 308 to 309 are interaction with tRNA; it reads RY.

Belongs to the MnmA/TRMU family.

The protein localises to the cytoplasm. The enzyme catalyses S-sulfanyl-L-cysteinyl-[protein] + uridine(34) in tRNA + AH2 + ATP = 2-thiouridine(34) in tRNA + L-cysteinyl-[protein] + A + AMP + diphosphate + H(+). Functionally, catalyzes the 2-thiolation of uridine at the wobble position (U34) of tRNA, leading to the formation of s(2)U34. This is tRNA-specific 2-thiouridylase MnmA from Burkholderia mallei (strain NCTC 10247).